Reading from the N-terminus, the 177-residue chain is MIRIIAIVVLFFLQCQADLPPVMKGLEENKVTGVWYGIAAASNCKQFLQMKSDNMPAPVNIYSLNNGHMKSSTSFQTEKGCQQMDVEMTTVEKGHYKWKMQQGDSETIIVATDYDAFLMEFTKIQMGAEVCVTVKLFGRKDTLPEDKIKHFEDHIEKVGLKKEQYIRFHTKATCVPK.

Residues 1–17 form the signal peptide; the sequence is MIRIIAIVVLFFLQCQA. Cysteine 81 and cysteine 174 are disulfide-bonded.

Belongs to the calycin superfamily. Lipocalin family. Synthesized in Bowman glands, which secrete the mucus that bathes the cilia of the olfactory neuroepithelium.

Its subcellular location is the secreted. The protein is Olfactory protein of Lithobates pipiens (Northern leopard frog).